Here is an 84-residue protein sequence, read N- to C-terminus: Large ribosomal subunit protein bL31B (84 aa).

This sequence belongs to the bacterial ribosomal protein bL31 family. Type B subfamily. As to quaternary structure, part of the 50S ribosomal subunit.

The protein is Large ribosomal subunit protein bL31B of Staphylococcus aureus (strain Mu3 / ATCC 700698).